Consider the following 1909-residue polypeptide: Nck-associated protein 5 (1909 aa).

Residues 71–253 (EKLIHELEEE…DLEQQNRTLS (183 aa)) are a coiled coil. Disordered stretches follow at residues 351–370 (SSYT…SQNW), 736–819 (EEDT…LMEP), 855–997 (PLFE…KKPS), 1026–1469 (SSSF…APLS), 1486–1509 (KGQV…FASW), 1541–1592 (GFGN…RTPQ), 1725–1750 (FPLP…DAEP), and 1763–1885 (SMRA…DYGD). The span at 736-748 (EEDTEKNIPKDNV) shows a compositional bias: basic and acidic residues. 4 stretches are compositionally biased toward polar residues: residues 753–789 (RVST…SRSS), 950–965 (APSS…SETA), 981–990 (VISSNPATTE), and 1066–1084 (PRIS…SKSV). Low complexity-rich tracts occupy residues 1110-1131 (SPSS…HNSP) and 1178-1187 (ASKSSVAVNK). Positions 1241 to 1250 (DGRDGVDNRS) are enriched in basic and acidic residues. A compositionally biased stretch (polar residues) spans 1300-1325 (QIITNTAERGNSLTRQNSSTESSPNK). Residues 1339–1366 (GRPSGHPSSGKGSLGSSGSFSSQHGSPS) show a composition bias toward low complexity. Over residues 1428-1446 (PGRTQHPSTFETSSTSKLE) the composition is skewed to polar residues. Over residues 1454–1466 (ASATATDAVSSEA) the composition is skewed to low complexity. Basic and acidic residues-rich tracts occupy residues 1547-1560 (LKSE…KPEL) and 1567-1576 (ELIKDTKSAD). The segment covering 1869-1878 (YSASGGSNSD) has biased composition (polar residues).

Interacts with the SH3-containing region of the adapter protein NCK. Expressed in fetal and adult brain, leukocytes and fetal fibroblasts.

This Homo sapiens (Human) protein is Nck-associated protein 5 (NCKAP5).